The primary structure comprises 66 residues: U1-theraphotoxin-Cg1d 1 (66 aa).

A signal peptide spans 1 to 21 (MKMSALFVIFGLALLFCNSFA). Residues 22 to 29 (AELKATGR) constitute a propeptide that is removed on maturation. Disulfide bonds link Cys-31/Cys-46, Cys-38/Cys-51, and Cys-45/Cys-58. Position 63 is a proline amide (Pro-63).

This sequence belongs to the neurotoxin 10 (Hwtx-1) family. 46 (Jztx-7/10/12) subfamily. As to expression, expressed by the venom gland.

The protein resides in the secreted. In terms of biological role, probable ion channel inhibitor. The protein is U1-theraphotoxin-Cg1d 1 of Chilobrachys guangxiensis (Chinese earth tiger tarantula).